The primary structure comprises 1041 residues: Nuclear pore complex protein NUP98A (1041 aa).

Residues 1–34 (MFGSSNPFGQSSGTSPFGSQSLFGQTSNTSSNNP) are compositionally biased toward polar residues. The interval 1–44 (MFGSSNPFGQSSGTSPFGSQSLFGQTSNTSSNNPFAPATPFGTS) is disordered. 44 consecutive repeat copies span residues 2 to 3 (FG), 8 to 9 (FG), 17 to 18 (FG), 23 to 24 (FG), 41 to 42 (FG), 56 to 57 (FG), 64 to 65 (FG), 79 to 80 (FG), 87 to 88 (FG), 94 to 95 (FG), 103 to 104 (FG), 109 to 110 (FG), 124 to 125 (FG), 135 to 136 (FG), 140 to 141 (FG), 146 to 147 (FG), 154 to 155 (FG), 162 to 163 (FG), 170 to 171 (FG), 178 to 179 (FG), 186 to 187 (FG), 194 to 195 (FG), 202 to 203 (FG), 210 to 211 (FG), 217 to 218 (FG), 222 to 223 (FG), 228 to 229 (FG), 236 to 237 (FG), 244 to 245 (FG), 252 to 253 (FG), 260 to 261 (FG), 268 to 269 (FG), 276 to 277 (FG), 284 to 285 (FG), 294 to 295 (FG), 300 to 301 (FG), 307 to 308 (FG), 312 to 313 (FG), 319 to 320 (FG), 329 to 330 (FG), 334 to 335 (FG), 339 to 340 (FG), 411 to 412 (FG), and 427 to 428 (FG). Positions 2 to 677 (FGSSNPFGQS…QPVAVTNPFG (676 aa)) are 65 X 2 AA repeats of F-G. Positions 98 to 171 (PASSPFGGSS…FGATSTPSFG (74 aa)) are disordered. Polar residues predominate over residues 117 to 171 (STPQSNPFGNSTQQSQPAFGNTSFGSSTPFGATNTPAFGAPSTPSFGATSTPSFG). Disordered stretches follow at residues 315–347 (TPSPFGGAQASTPTFGGSGFGQSTFGGQQGGSR) and 392–447 (QRGD…TNPF). Positions 430-447 (TSANPTNPFSSSTSTNPF) are enriched in low complexity. Tandem repeats lie at residues 459–460 (FG), 466–467 (FG), 471–472 (FG), 480–481 (FG), 491–492 (FG), 497–498 (FG), 506–507 (FG), 514–515 (FG), 521–522 (FG), 533–534 (FG), 555–556 (FG), 562–563 (FG), 565–566 (FG), 573–574 (FG), 586–587 (FG), 604–605 (FG), 627–628 (FG), 632–633 (FG), 650–651 (FG), 655–656 (FG), and 676–677 (FG). Residues 517–526 (SSSIFGSAPG) are compositionally biased toward low complexity. The disordered stretch occupies residues 517-560 (SSSIFGSAPGQGATPAFGNSQPSTLFNSTPSTGQTGSAFGQTGS). The span at 533–560 (FGNSQPSTLFNSTPSTGQTGSAFGQTGS) shows a compositional bias: polar residues. The disordered stretch occupies residues 734 to 860 (KYRPGENGPK…KERPYKTLSG (127 aa)). The span at 782–793 (SRDKSILPKEQR) shows a compositional bias: basic and acidic residues. The span at 831 to 846 (TSVNANQKPNGTTRSD) shows a compositional bias: polar residues. The Peptidase S59 domain maps to 885–1027 (QSDYFTEPRI…GEWKFRVEHF (143 aa)).

The protein belongs to the nucleoporin GLFG family. As to quaternary structure, part of the nuclear pore complex (NPC). The NPC has an eight-fold symmetrical structure comprising a central transport channel and two rings, the cytoplasmic and nuclear rings, to which eight filaments are attached. The cytoplasmic filaments have loose ends, while the nuclear filaments are joined in a distal ring, forming a nuclear basket. NPCs are highly dynamic in configuration and composition, and can be devided in 3 subcomplexes, the NUP62 subcomplex, the NUP107-160 subcomplex and the NUP93 subcomplex, containing approximately 30 different nucleoporin proteins.

The protein resides in the nucleus. It is found in the nuclear pore complex. This is Nuclear pore complex protein NUP98A from Arabidopsis thaliana (Mouse-ear cress).